The primary structure comprises 186 residues: Pyridoxal 5'-phosphate synthase subunit PdxT (186 aa).

46 to 48 (GES) is an L-glutamine binding site. The active-site Nucleophile is the C75. Residues R101 and 127-128 (IR) contribute to the L-glutamine site. Active-site charge relay system residues include H164 and E166.

It belongs to the glutaminase PdxT/SNO family. In terms of assembly, in the presence of PdxS, forms a dodecamer of heterodimers. Only shows activity in the heterodimer.

It catalyses the reaction aldehydo-D-ribose 5-phosphate + D-glyceraldehyde 3-phosphate + L-glutamine = pyridoxal 5'-phosphate + L-glutamate + phosphate + 3 H2O + H(+). The catalysed reaction is L-glutamine + H2O = L-glutamate + NH4(+). Its pathway is cofactor biosynthesis; pyridoxal 5'-phosphate biosynthesis. Its function is as follows. Catalyzes the hydrolysis of glutamine to glutamate and ammonia as part of the biosynthesis of pyridoxal 5'-phosphate. The resulting ammonia molecule is channeled to the active site of PdxS. This Methanococcus aeolicus (strain ATCC BAA-1280 / DSM 17508 / OCM 812 / Nankai-3) protein is Pyridoxal 5'-phosphate synthase subunit PdxT.